The primary structure comprises 132 residues: MATRHQVRQSVISLLYAFELNSQNNVFVDEILDEKKIRNEQKNFTLNLYNGILDNLNNIDETLNSFLNDNQITALGHVERAILRLGAYELLFTDTPSAIVINEAIELAKELANDNSPKFINGVLDALIKAKK.

Belongs to the NusB family.

In terms of biological role, involved in transcription antitermination. Required for transcription of ribosomal RNA (rRNA) genes. Binds specifically to the boxA antiterminator sequence of the ribosomal RNA (rrn) operons. In Campylobacter jejuni subsp. jejuni serotype O:2 (strain ATCC 700819 / NCTC 11168), this protein is Transcription antitermination protein NusB.